Consider the following 419-residue polypeptide: Aminoacyltransferase FemB (419 aa).

It belongs to the FemABX family. As to quaternary structure, homodimer. Interacts with FemA.

The protein localises to the cytoplasm. The catalysed reaction is MurNAc-L-Ala-D-isoglutaminyl-L-Lys-(N(6)-tri-Gly)-D-Ala-D-Ala-diphospho-di-trans,octa-cis-undecaprenyl-GlcNAc + 2 glycyl-tRNA(Gly) = MurNAc-L-Ala-D-isoglutaminyl-L-Lys-(N(6)-penta-Gly)-D-Ala-D-Ala-diphospho-di-trans,octa-cis-undecaprenyl-GlcNAc + 2 tRNA(Gly) + 2 H(+). Catalyzes the formation of the pentaglycine interpeptide bridge, which is characteristic of the S.aureus peptidoglycan. Adds glycines 4 and 5 of the pentaglycine bridge, using glycyl-tRNA(Gly) as donor. This is Aminoacyltransferase FemB (femB) from Staphylococcus aureus (strain bovine RF122 / ET3-1).